Consider the following 685-residue polypeptide: tRNA-dihydrouridine(47) synthase [NAD(P)(+)]-like (685 aa).

A compositionally biased stretch (low complexity) spans 1–12 (MAATAAAAAAAP). Disordered regions lie at residues 1 to 91 (MAAT…SSSH), 209 to 234 (AANDDKKVNHDNLDGNDDENKEPLCN), and 257 to 314 (LIDN…SCRT). The segment covering 13–29 (PADPPDSSPAASSPPRP) has biased composition (pro residues). The segment at 87–118 (KSSSHLCIEVGKSGNVSSCKYGDSCRFSHDID) adopts a C3H1-type zinc-finger fold. Composition is skewed to basic and acidic residues over residues 209–221 (AANDDKKVNHDNL) and 273–284 (SKVESDEIDKHG). A compositionally biased stretch (polar residues) spans 287-314 (TLNTNTESEDPNLSNGLEPSNNSSSCRT). Residues 338 to 340 (PLT) and glutamine 392 contribute to the FMN site. Residue cysteine 423 is the Proton donor of the active site. FMN-binding positions include lysine 462, histidine 492, 525–527 (NGD), and 550–551 (AR).

Belongs to the Dus family. Dus3 subfamily. FMN serves as cofactor.

It carries out the reaction 5,6-dihydrouridine(47) in tRNA + NAD(+) = uridine(47) in tRNA + NADH + H(+). The catalysed reaction is 5,6-dihydrouridine(47) in tRNA + NADP(+) = uridine(47) in tRNA + NADPH + H(+). The enzyme catalyses a 5,6-dihydrouridine in mRNA + NAD(+) = a uridine in mRNA + NADH + H(+). It catalyses the reaction a 5,6-dihydrouridine in mRNA + NADP(+) = a uridine in mRNA + NADPH + H(+). Catalyzes the synthesis of dihydrouridine, a modified base found in the D-loop of most tRNAs. Specifically modifies U47 in cytoplasmic tRNAs. Catalyzes the synthesis of dihydrouridine in some mRNAs, thereby affecting their translation. This is tRNA-dihydrouridine(47) synthase [NAD(P)(+)]-like from Oryza sativa subsp. japonica (Rice).